The primary structure comprises 84 residues: FMRFamide-like neuropeptides 26 (84 aa).

An N-terminal signal peptide occupies residues 1 to 19 (MKVMFMLALLFSSLVATSA). The propeptide occupies 20 to 48 (FRLPFQFFGANEDFNSGLTKRNYYESKPY). Phenylalanine amide is present on residues F61 and F82.

It belongs to the FARP (FMRFamide related peptide) family. Each flp gene is expressed in a distinct set of neurons.

It localises to the secreted. Its function is as follows. FMRFamides and FMRFamide-like peptides are neuropeptides. This chain is FMRFamide-like neuropeptides 26, found in Caenorhabditis elegans.